The chain runs to 468 residues: Efflux pump azaK (468 aa).

The interval 1–30 (MTVHPPAVADETSPLLPSQDGPGHNGIVPA) is disordered. 6 consecutive transmembrane segments (helical) span residues 43 to 65 (QVAL…FPFV), 80 to 100 (VGFY…MLMI), 112 to 132 (KPVL…FGFS), 135 to 155 (LGQM…VVTV), 174 to 194 (YFSL…GALC), and 207 to 227 (LPTV…LMFV). Asn228 is a glycosylation site (N-linked (GlcNAc...) asparagine). 6 helical membrane passes run 257-277 (VLPV…YTAV), 296-316 (FYIS…LVLV), 329-349 (ILRG…GASV), 357-377 (VAFW…AMQL), 387-407 (VSPS…IISF), and 429-449 (PGFY…AFTL).

This sequence belongs to the major facilitator superfamily.

The protein localises to the cell membrane. In terms of biological role, efflux pump that might be required for efficient secretion of azaphilones. This Aspergillus niger (strain ATCC 1015 / CBS 113.46 / FGSC A1144 / LSHB Ac4 / NCTC 3858a / NRRL 328 / USDA 3528.7) protein is Efflux pump azaK.